A 400-amino-acid chain; its full sequence is Elongation factor Tu (400 aa).

The tr-type G domain occupies 10–209 (KEHVNIGTIG…QVDNWIDAPL (200 aa)). The segment at 19 to 26 (GHVDHGKT) is G1. 19–26 (GHVDHGKT) serves as a coordination point for GTP. Thr-26 is a binding site for Mg(2+). The tract at residues 61–65 (GITIN) is G2. Residues 82 to 85 (DCPG) are G3. GTP contacts are provided by residues 82–86 (DCPGH) and 137–140 (NKVD). A G4 region spans residues 137 to 140 (NKVD). The interval 179 to 181 (SAL) is G5.

Belongs to the TRAFAC class translation factor GTPase superfamily. Classic translation factor GTPase family. EF-Tu/EF-1A subfamily. Monomer.

It is found in the cytoplasm. It catalyses the reaction GTP + H2O = GDP + phosphate + H(+). Functionally, GTP hydrolase that promotes the GTP-dependent binding of aminoacyl-tRNA to the A-site of ribosomes during protein biosynthesis. The protein is Elongation factor Tu of Mycoplasma mobile (strain ATCC 43663 / 163K / NCTC 11711) (Mesomycoplasma mobile).